We begin with the raw amino-acid sequence, 303 residues long: Centromere protein O (303 aa).

Residues 38–77 (AALRKNQELVLELRKKRDELKAKIERHKAEIQAFRGREEA) adopt a coiled-coil conformation.

This sequence belongs to the CENP-O/MCM21 family.

Its subcellular location is the nucleus. The protein localises to the chromosome. It localises to the centromere. Probable component of a centromeric complex involved in assembly of kinetochore proteins, mitotic progression and chromosome segregation. The sequence is that of Centromere protein O (cenpo) from Xenopus tropicalis (Western clawed frog).